Consider the following 150-residue polypeptide: Probable deoxyuridine 5'-triphosphate nucleotidohydrolase (150 aa).

This sequence belongs to the dCTP deaminase family. Archaeal dUTPase subfamily.

It catalyses the reaction dUTP + H2O = dUMP + diphosphate + H(+). Its pathway is pyrimidine metabolism; dUMP biosynthesis; dUMP from dCTP (dUTP route): step 2/2. Functionally, this enzyme is involved in nucleotide metabolism: it produces dUMP, the immediate precursor of thymidine nucleotides and it decreases the intracellular concentration of dUTP so that uracil cannot be incorporated into DNA. This Methanothermobacter thermautotrophicus (strain ATCC 29096 / DSM 1053 / JCM 10044 / NBRC 100330 / Delta H) (Methanobacterium thermoautotrophicum) protein is Probable deoxyuridine 5'-triphosphate nucleotidohydrolase.